Reading from the N-terminus, the 322-residue chain is RNA pseudouridine synthase 1 (322 aa).

Residue aspartate 120 is part of the active site.

Belongs to the pseudouridine synthase RluA family.

It catalyses the reaction a uridine in RNA = a pseudouridine in RNA. The chain is RNA pseudouridine synthase 1 from Arabidopsis thaliana (Mouse-ear cress).